The chain runs to 1534 residues: MDIYDTQTLGVMVFGGFMVVSAIGIFLVSTFSMKETSYEEALANQRKEMAKTHHQKVEKKKKEKTVEKKGKTKKKEEKPNGKIPDHEPAPNVTILLKDPVRAPAVPVAPTPVQPPVVIAPVATVPAMPQEKLAPSPKDKKKKEKKVAKVEPAVSSVVNSVQVLASKAAILETAPKEVPMVVVPPVGAKAGTPATSTAQGKKAEGAQNQSRKAEGAPNQGKKAEGALNQGKKAEGAQNQGKKVEVAPNQGKKAEGGQNQGKKVEGAQNQGKKAEGTPNQGKKAEGAPNQGKKTDGAPNQGKKSEGAPNQGKKAEGAQNQGKKVEVAPNQGKKAEGGQNQGKKVEGAQNQGKKAEGTPNQGKKAEGAPNQGKKTDGAPNQGKKSEGAPNQGKKVEGAQNQGKKVEGVQNQGKKAEGAQNQGKKAEGTSSQGRKEEGTPNLGKKAEGSPNQGKKVEVVQNQSKKVEGAPNQGKKAEGSQNQGKKTEGASNQGKKVDGAQNQGKKAEGAPNQGKKVEGAQNQGKKAEGTPNQGKKAEGAQNQGKKAEGAPNQGKKAEGAPNQGKKAEGAPNQGKKAEGAPNQGKKAEAAPNQGKKAEGAPNQGKKAEGAPNQGKKAEAAPNQGKKAEGAPNQGKKAEGAPNQGKKAEGAPNQGKKAEGAQNQGKKAEGAPNQGKKADLVANQGTKAEGVAGQGKKAEGAPNQGKKGEGTPNQGKKSEGSPNQGKKVDASANQSKRAESAPIQGKNADMVQSQEAPKQEAPAKKKSGSKKKGEPGPPDSDSPLYLPYKTLVSTVGSMVFNEGEAQRLIEILSEKAGVIQDTWHKATQKGDPVAILKRQLEEKEKLLATEQEDAAVAKSKLREVNKELAAEKAKAAAGEAKVKKQLVAREQEITAVQARIEASYREHVKEVQQLQGKIRTLQEQLENGPNTQLARLQQENSILRDALNQATSQVESKQNTELAKLRQELSKVSKELVEKSEAARQEEQQRKALETKTAALEKQVLQLQASHKESEEALQKRLDEVSRELCRSQTSHASLRADAEKAQEQQQQMAELHSKLQSSEAEVKSKSEELSGLHGQLKEARAENSQLMERIRSIEALLEAGQARDTQDAQASRAEHQARLKELESQVWCLEKEATELKEAVEQQKVKNNDLREKNWKAMEALASAERACEEKLRSLTQAKEESEKQLSLTEAQTKEALLALLPALSSSAPQSYTEWLQELREKGPELLKQRPADTDPSSDLASKLREAEETQNNLQAECDQYRTILAETEGMLKDLQKSVEEEEQVWKAKVSATEEELQKSRVTVKHLEDIVEKLKGELESSEQVREHTSHLEAELEKHMAAASAECQSYAKEVAGLRQLLLESQSQLDAAKSEAQKQSNELALVRQQLSEMKSHVEDGDVAGSPAAPPAEQDPVELKAQLERTEATLEDEQALRRKLTAEFQEAQSSACRLQAELEKLRSTGPLESSAAEEATQLKERLEKEKKLTSDLGHAATKLQELLKTTQEQLAKERDTVKKLQEQLDKTDDSSSKEGTSV.

Topologically, residues 1–7 are lumenal; sequence MDIYDTQ. The chain crosses the membrane as a helical span at residues 8–28; sequence TLGVMVFGGFMVVSAIGIFLV. Residues 29-1534 are Cytoplasmic-facing; the sequence is STFSMKETSY…DSSSKEGTSV (1506 aa). Disordered stretches follow at residues 45–91 and 125–152; these read QRKE…PAPN and PAMP…VEPA. The span at 52–63 shows a compositional bias: basic residues; sequence THHQKVEKKKKE. Basic and acidic residues predominate over residues 64-88; that stretch reads KTVEKKGKTKKKEEKPNGKIPDHEP. Residues 125–135 show a composition bias toward low complexity; that stretch reads PAMPQEKLAPS. A Glycyl lysine isopeptide (Lys-Gly) (interchain with G-Cter in SUMO2) cross-link involves residue Lys-148. A phosphoserine mark is found at Ser-159 and Ser-165. Disordered regions lie at residues 173–780, 968–987, and 1021–1082; these read APKE…PLYL, KELV…RKAL, and RELC…RAEN. Residues 175–194 show a composition bias toward low complexity; it reads KEVPMVVVPPVGAKAGTPAT. Tandem repeats lie at residues 197–206, 207–216, 217–226, 227–236, 237–246, 247–256, 257–266, 267–276, 277–286, 287–296, 297–306, 307–316, 317–326, 327–336, 337–346, 347–356, 357–366, 367–376, 377–386, 387–396, 397–406, 407–416, 417–426, 427–436, 437–446, 447–456, 457–466, 467–476, 477–486, 487–496, 497–506, 507–516, 517–526, 527–536, 537–546, 547–556, 557–566, 567–576, 577–586, 587–596, 597–606, 607–616, 617–626, 627–636, 637–646, 647–656, 657–666, 667–676, 677–686, 687–696, 697–706, 707–716, 717–726, and 727–736. Residues 197–736 form a 54 X 10 AA tandem repeats of [NASG]-[QL]-[GS]-[KRT]-[KR]-[AVTSEG]-[ED]-[AGVLS]-[ATGSV]-[PQLSA] region; it reads AQGKKAEGAQ…NQSKRAESAP (540 aa). Residue Thr-275 is modified to Phosphothreonine. Over residues 395 to 428 the composition is skewed to polar residues; it reads AQNQGKKVEGVQNQGKKAEGAQNQGKKAEGTSSQ. A compositionally biased stretch (polar residues) spans 474–499; the sequence is GSQNQGKKTEGASNQGKKVDGAQNQG. Residues 705–718 are compositionally biased toward polar residues; that stretch reads TPNQGKKSEGSPNQ. At Ser-715 the chain carries Phosphoserine. Phosphoserine is present on Ser-747. Residue Lys-752 forms a Glycyl lysine isopeptide (Lys-Gly) (interchain with G-Cter in SUMO1) linkage. Residue Ser-1032 is modified to Phosphoserine. The span at 1059–1080 shows a compositional bias: basic and acidic residues; the sequence is AEVKSKSEELSGLHGQLKEARA. An N6-acetyllysine modification is found at Lys-1064. 2 positions are modified to phosphoserine: Ser-1091 and Ser-1110. Disordered stretches follow at residues 1224–1251, 1391–1416, and 1509–1534; these read ELLK…ETQN, KSHV…VELK, and ERDT…GTSV. A compositionally biased stretch (basic and acidic residues) spans 1509 to 1528; it reads ERDTVKKLQEQLDKTDDSSS.

The protein localises to the endoplasmic reticulum membrane. In terms of biological role, acts as a ribosome receptor and mediates interaction between the ribosome and the endoplasmic reticulum membrane. This Canis lupus familiaris (Dog) protein is Ribosome-binding protein 1 (RRBP1).